Here is a 106-residue protein sequence, read N- to C-terminus: Putative double-stranded DNA mimic protein VCM66_1163 (106 aa).

Belongs to the putative dsDNA mimic protein family.

May act as a double-stranded DNA (dsDNA) mimic. Probably regulates the activity of a dsDNA-binding protein. The polypeptide is Putative double-stranded DNA mimic protein VCM66_1163 (Vibrio cholerae serotype O1 (strain M66-2)).